The sequence spans 291 residues: ATP synthase gamma chain (291 aa).

This sequence belongs to the ATPase gamma chain family. In terms of assembly, F-type ATPases have 2 components, CF(1) - the catalytic core - and CF(0) - the membrane proton channel. CF(1) has five subunits: alpha(3), beta(3), gamma(1), delta(1), epsilon(1). CF(0) has three main subunits: a, b and c.

The protein resides in the cell membrane. Its function is as follows. Produces ATP from ADP in the presence of a proton gradient across the membrane. The gamma chain is believed to be important in regulating ATPase activity and the flow of protons through the CF(0) complex. In Streptococcus pyogenes serotype M49 (strain NZ131), this protein is ATP synthase gamma chain.